The following is a 210-amino-acid chain: Uridine kinase (210 aa).

Residue 12–19 (GGSGGGKT) coordinates ATP.

The protein belongs to the uridine kinase family.

The protein localises to the cytoplasm. It catalyses the reaction uridine + ATP = UMP + ADP + H(+). The enzyme catalyses cytidine + ATP = CMP + ADP + H(+). It functions in the pathway pyrimidine metabolism; CTP biosynthesis via salvage pathway; CTP from cytidine: step 1/3. It participates in pyrimidine metabolism; UMP biosynthesis via salvage pathway; UMP from uridine: step 1/1. In Streptococcus uberis (strain ATCC BAA-854 / 0140J), this protein is Uridine kinase.